The following is a 415-amino-acid chain: WD repeat-containing protein JIP5 (415 aa).

WD repeat units lie at residues 5–44 (DVGS…KEQA), 104–142 (AHDS…CVRE), 145–184 (QHFD…PEPF), 189–228 (DQDD…GDCV), and 233–282 (GHPL…VVAD). Residues 328–415 (GALGVTNENE…DVENAFFDEL (88 aa)) form a disordered region. Positions 337–346 (EQSDEDEEMD) are enriched in acidic residues. The segment covering 358–367 (DGSGSSSSGE) has biased composition (low complexity). Positions 390-405 (EQKPLDVDKPKGRNEI) are enriched in basic and acidic residues.

This sequence belongs to the WD repeat WDR55 family.

The protein resides in the nucleus. It is found in the nucleolus. This is WD repeat-containing protein JIP5 (JIP5) from Laccaria bicolor (strain S238N-H82 / ATCC MYA-4686) (Bicoloured deceiver).